Here is a 118-residue protein sequence, read N- to C-terminus: Putative pterin-4-alpha-carbinolamine dehydratase (118 aa).

This sequence belongs to the pterin-4-alpha-carbinolamine dehydratase family.

It carries out the reaction (4aS,6R)-4a-hydroxy-L-erythro-5,6,7,8-tetrahydrobiopterin = (6R)-L-erythro-6,7-dihydrobiopterin + H2O. The chain is Putative pterin-4-alpha-carbinolamine dehydratase from Pseudomonas fluorescens (strain ATCC BAA-477 / NRRL B-23932 / Pf-5).